The sequence spans 498 residues: Isocitrate dehydrogenase [NADP], mitochondrial (498 aa).

NADP(+) is bound by residues 164–166 (TIT) and Arg-171. Thr-166 provides a ligand contact to substrate. Residues 183–189 (SPNGTIR), Arg-198, and Arg-221 contribute to the substrate site. A Mn(2+)-binding site is contributed by Asp-339. Position 347 (Lys-347) interacts with NADP(+). Asp-362 serves as a coordination point for Mn(2+). Residues 397–402 (GTVTRH) and Asn-415 each bind NADP(+).

Belongs to the isocitrate and isopropylmalate dehydrogenases family. Mg(2+) is required as a cofactor. The cofactor is Mn(2+).

The protein localises to the mitochondrion. It catalyses the reaction D-threo-isocitrate + NADP(+) = 2-oxoglutarate + CO2 + NADPH. This is Isocitrate dehydrogenase [NADP], mitochondrial (icdA) from Aspergillus niger.